The primary structure comprises 116 residues: uncharacterized protein (116 aa).

Residues 1-72 (MCKHVLNAQV…SDEYCPNCDN (72 aa)) form a CHY-type zinc finger. Residues C2, H4, C16, C17, C23, C26, H27, H33, C45, C48, C67, and C70 each coordinate Zn(2+).

The protein resides in the cytoplasm. This is an uncharacterized protein from Schizosaccharomyces pombe (strain 972 / ATCC 24843) (Fission yeast).